A 79-amino-acid polypeptide reads, in one-letter code: Cell division protein ZapB (79 aa).

The stretch at 4–78 (EVFEKLEAKV…LRALLGKMEE (75 aa)) forms a coiled coil.

The protein belongs to the ZapB family. Homodimer. The ends of the coiled-coil dimer bind to each other, forming polymers. Interacts with FtsZ.

The protein resides in the cytoplasm. Functionally, non-essential, abundant cell division factor that is required for proper Z-ring formation. It is recruited early to the divisome by direct interaction with FtsZ, stimulating Z-ring assembly and thereby promoting cell division earlier in the cell cycle. Its recruitment to the Z-ring requires functional FtsA or ZipA. The chain is Cell division protein ZapB from Pectobacterium atrosepticum (strain SCRI 1043 / ATCC BAA-672) (Erwinia carotovora subsp. atroseptica).